Reading from the N-terminus, the 674-residue chain is Pre-mRNA-splicing factor cwf4 (674 aa).

HAT repeat units lie at residues 50-82, 84-116, 118-150, 152-183, 185-216, 218-253, 255-289, 299-331, 333-367, 377-413, 415-446, 448-480, 482-516, 518-549, 567-608, and 610-643; these read EFQG…WELD, KEFA…CEMK, RNIN…MEEM, GNIT…MERR, HENE…FEEE, GNAA…FEIR, KEYE…FEKQ, TVLD…LEES, GDIN…IWLN, KDVD…FELR, RKID…FEDA, KQFD…LETK, GDSD…FEFE, MEYG…FEIA, TAVV…MHGT, and DTRK…YLFP.

The protein belongs to the crooked-neck family. In terms of assembly, belongs to the 40S cdc5-associated complex (or cwf complex), a spliceosome sub-complex reminiscent of a late-stage spliceosome composed of the U2, U5 and U6 snRNAs and at least brr2, cdc5, cwf2/prp3, cwf3/syf1, cwf4/syf3, cwf5/ecm2, spp42/cwf6, cwf7/spf27, cwf8, cwf9, cwf10, cwf11, cwf12, prp45/cwf13, cwf14, cwf15, cwf16, cwf17, cwf18, cwf19, cwf20, cwf21, cwf22, cwf23, cwf24, cwf25, cwf26, cyp7/cwf27, cwf28, cwf29/ist3, lea1, msl1, prp5/cwf1, prp10, prp12/sap130, prp17, prp22, sap61, sap62, sap114, sap145, slu7, smb1, smd1, smd3, smf1, smg1 and syf2.

Its subcellular location is the nucleus. Its function is as follows. Involved in pre-mRNA splicing and cell cycle progression. Required for the spliceosome assembly and initiation of the DNA replication. The protein is Pre-mRNA-splicing factor cwf4 (cwf4) of Schizosaccharomyces pombe (strain 972 / ATCC 24843) (Fission yeast).